Consider the following 260-residue polypeptide: DNA import protein CedA (260 aa).

6 helical membrane-spanning segments follow: residues 13 to 33 (LLASLTYFIGAAIYALPVPVY), 47 to 67 (IYVVVWNSIYLGVLLFLGELL), 110 to 130 (ALIQVVPFGALLTVITSALTF), 140 to 160 (IVYQYVAVFIATGVLFLSIPF), 169 to 189 (AFIGSGIVFYVGLPYLPQFLA), and 220 to 240 (IITSLVIGPVIYIFILVGFSM).

Forms a complex composed of CedA, CedA1 and CedA2.

The protein localises to the cell membrane. In terms of biological role, part of the Ced system, which is involved in DNA import. This is DNA import protein CedA from Sulfolobus acidocaldarius (strain ATCC 33909 / DSM 639 / JCM 8929 / NBRC 15157 / NCIMB 11770).